Consider the following 185-residue polypeptide: Ribosome-recycling factor (185 aa).

The protein belongs to the RRF family.

Its subcellular location is the cytoplasm. Its function is as follows. Responsible for the release of ribosomes from messenger RNA at the termination of protein biosynthesis. May increase the efficiency of translation by recycling ribosomes from one round of translation to another. The polypeptide is Ribosome-recycling factor (Campylobacter concisus (strain 13826)).